The primary structure comprises 229 residues: Putative ankyrin repeat protein L148 (229 aa).

4 ANK repeats span residues 70-95, 96-126, 127-156, and 157-186; these read ILDY…PDNY, IGTE…DLRI, NNDY…NCQA, and YNNA…SVAA.

In Acanthamoeba polyphaga (Amoeba), this protein is Putative ankyrin repeat protein L148.